Here is a 214-residue protein sequence, read N- to C-terminus: Thymidylate kinase (214 aa).

9 to 16 lines the ATP pocket; it reads GVDGSGKS.

This sequence belongs to the thymidylate kinase family.

The catalysed reaction is dTMP + ATP = dTDP + ADP. Its function is as follows. Phosphorylation of dTMP to form dTDP in both de novo and salvage pathways of dTTP synthesis. The sequence is that of Thymidylate kinase from Symbiobacterium thermophilum (strain DSM 24528 / JCM 14929 / IAM 14863 / T).